The chain runs to 175 residues: E1B protein, small T-antigen (175 aa).

The tract at residues L153 to A175 is disordered.

It belongs to the adenoviridae E1B 19 kDa protein family.

This is E1B protein, small T-antigen from Mus musculus (Mouse).